Reading from the N-terminus, the 331-residue chain is Cytosolic arginine sensor for mTORC1 subunit 1 (331 aa).

Ser14 carries the phosphoserine modification. An ACT 1 domain is found at 72–139 (AEATWLVMNV…SVVIHTLARE (68 aa)). Residue 110-111 (SV) coordinates L-arginine. Residues 155–174 (GDDSSNGFPQAQHGPSPTVH) are disordered. Over residues 156–174 (DDSSNGFPQAQHGPSPTVH) the composition is skewed to polar residues. One can recognise an ACT 2 domain in the interval 262-322 (WRMVRIGGQP…SCVIDILQRR (61 aa)). Residues Gly273, 279–280 (IV), and 299–303 (TFNFD) contribute to the L-arginine site.

This sequence belongs to the GATS family. Forms homodimers and heterodimers with CASTOR2. Interacts with the GATOR2 complex which is composed of MIOS, SEC13, SEH1L, WDR24 and WDR59; the interaction is negatively regulated by arginine. Interacts with TM4SF5; the interaction is positively regulated by leucine and is negatively regulated by arginine. Post-translationally, phosphorylation at Ser-14 by AKT1, promoting the interaction between CASTOR1 and RNF167. Ubiquitinated by RNF167 via 'Lys-29'-polyubiquitination, leading to its degradation, releasing the GATOR2 complex. Ubiquitination by RNF167 is promoted by phosphorylation at Ser-14 by AKT1.

Its subcellular location is the cytoplasm. The protein resides in the cytosol. Its function is as follows. Functions as an intracellular arginine sensor within the amino acid-sensing branch of the TORC1 signaling pathway. As a homodimer or a heterodimer with CASTOR2, binds and inhibits the GATOR subcomplex GATOR2 and thereby mTORC1. Binding of arginine to CASTOR1 allosterically disrupts the interaction of CASTOR1-containing dimers with GATOR2 which can in turn activate mTORC1 and the TORC1 signaling pathway. This is Cytosolic arginine sensor for mTORC1 subunit 1 from Rattus norvegicus (Rat).